A 505-amino-acid chain; its full sequence is Apolipoprotein N-acyltransferase (505 aa).

6 helical membrane-spanning segments follow: residues Leu-23–Tyr-43, Gly-58–Asn-78, Pro-85–Leu-105, Leu-125–Phe-145, Leu-162–Leu-182, and Pro-192–Leu-212. The CN hydrolase domain maps to Ile-230–Pro-469. The active-site Proton acceptor is Glu-269. The active site involves Lys-329. Residue Cys-381 is the Nucleophile of the active site. The chain crosses the membrane as a helical span at residues Trp-482 to Ala-502.

The protein belongs to the CN hydrolase family. Apolipoprotein N-acyltransferase subfamily.

It is found in the cell inner membrane. The enzyme catalyses N-terminal S-1,2-diacyl-sn-glyceryl-L-cysteinyl-[lipoprotein] + a glycerophospholipid = N-acyl-S-1,2-diacyl-sn-glyceryl-L-cysteinyl-[lipoprotein] + a 2-acyl-sn-glycero-3-phospholipid + H(+). The protein operates within protein modification; lipoprotein biosynthesis (N-acyl transfer). Its function is as follows. Catalyzes the phospholipid dependent N-acylation of the N-terminal cysteine of apolipoprotein, the last step in lipoprotein maturation. The protein is Apolipoprotein N-acyltransferase of Pseudomonas putida (strain ATCC 47054 / DSM 6125 / CFBP 8728 / NCIMB 11950 / KT2440).